Consider the following 174-residue polypeptide: NADH-ubiquinone oxidoreductase chain 6 (174 aa).

A run of 6 helical transmembrane segments spans residues 1–21 (MTYVLFLLSVSLVMGFVGFSS), 24–44 (SPIYGGLVLIVSGVVGCTIIL), 47–67 (GGGYMGLMVFLIYLGGMMVVF), 86–106 (VEVLVSVLVGLAMEVGLVLWV), 111–131 (GVVVVVNFNSVGSWMIYEGEG), and 151–171 (WLVVVTGWTLFVGVYIVIEIA).

This sequence belongs to the complex I subunit 6 family. Core subunit of respiratory chain NADH dehydrogenase (Complex I) which is composed of 45 different subunits.

Its subcellular location is the mitochondrion inner membrane. The enzyme catalyses a ubiquinone + NADH + 5 H(+)(in) = a ubiquinol + NAD(+) + 4 H(+)(out). Functionally, core subunit of the mitochondrial membrane respiratory chain NADH dehydrogenase (Complex I) which catalyzes electron transfer from NADH through the respiratory chain, using ubiquinone as an electron acceptor. Essential for the catalytic activity and assembly of complex I. This is NADH-ubiquinone oxidoreductase chain 6 (MT-ND6) from Pan paniscus (Pygmy chimpanzee).